Consider the following 1859-residue polypeptide: Y' element ATP-dependent helicase protein 1 copy 6 (1859 aa).

The 178-residue stretch at 861–1038 (EIYMADTPSV…LQRIGLTGLA (178 aa)) folds into the Helicase ATP-binding domain. 874 to 881 (APPGYGKT) lines the ATP pocket. The Helicase C-terminal domain maps to 1095-1244 (KLLLALFEIE…EFYGLESKKG (150 aa)). Over residues 1318–1461 (ANASTNATTN…ATTTESTNAS (144 aa)) the composition is skewed to low complexity. Residues 1318–1485 (ANASTNATTN…RFHPVTDINK (168 aa)) are disordered. A compositionally biased stretch (basic and acidic residues) spans 1462-1485 (AKEDANKDGNAEDNRFHPVTDINK).

It belongs to the helicase family. Yeast subtelomeric Y' repeat subfamily.

Functionally, catalyzes DNA unwinding and is involved in telomerase-independent telomere maintenance. The sequence is that of Y' element ATP-dependent helicase protein 1 copy 6 (YRF1-6) from Saccharomyces cerevisiae (strain ATCC 204508 / S288c) (Baker's yeast).